The chain runs to 277 residues: Ribosomal RNA small subunit methyltransferase I (277 aa).

Belongs to the methyltransferase superfamily. RsmI family.

Its subcellular location is the cytoplasm. The catalysed reaction is cytidine(1402) in 16S rRNA + S-adenosyl-L-methionine = 2'-O-methylcytidine(1402) in 16S rRNA + S-adenosyl-L-homocysteine + H(+). Functionally, catalyzes the 2'-O-methylation of the ribose of cytidine 1402 (C1402) in 16S rRNA. In Mycoplasma genitalium (strain ATCC 33530 / DSM 19775 / NCTC 10195 / G37) (Mycoplasmoides genitalium), this protein is Ribosomal RNA small subunit methyltransferase I.